We begin with the raw amino-acid sequence, 168 residues long: NADH-quinone oxidoreductase subunit B (168 aa).

Residues Cys-37, Cys-38, Cys-103, and Cys-132 each coordinate [4Fe-4S] cluster.

It belongs to the complex I 20 kDa subunit family. NDH-1 is composed of 14 different subunits. Subunits NuoB, C, D, E, F, and G constitute the peripheral sector of the complex. The cofactor is [4Fe-4S] cluster.

The protein resides in the cell inner membrane. The enzyme catalyses a quinone + NADH + 5 H(+)(in) = a quinol + NAD(+) + 4 H(+)(out). NDH-1 shuttles electrons from NADH, via FMN and iron-sulfur (Fe-S) centers, to quinones in the respiratory chain. The immediate electron acceptor for the enzyme in this species is believed to be ubiquinone. Couples the redox reaction to proton translocation (for every two electrons transferred, four hydrogen ions are translocated across the cytoplasmic membrane), and thus conserves the redox energy in a proton gradient. The chain is NADH-quinone oxidoreductase subunit B from Campylobacter fetus subsp. fetus (strain 82-40).